The sequence spans 538 residues: Protein PNS1 (538 aa).

Residues 1 to 54 (MGESDAYYNGGQQQQYNGGYQQQYQPQPPAASYQAPPQQPYQQQPYQQGPPQNG) show a composition bias toward low complexity. The disordered stretch occupies residues 1–67 (MGESDAYYNG…GNGYMPAQGY (67 aa)). Topologically, residues 1 to 88 (MGESDAYYNG…FKIAKPKYND (88 aa)) are cytoplasmic. The helical transmembrane segment at 89 to 109 (LWAGILLILVFAGFVVVSGLA) threads the bilayer. Residues 110-137 (LQGYSANKGNAGDGIYNNKNDFSPNTST) are Extracellular-facing. A glycan (N-linked (GlcNAc...) asparagine) is linked at N134. The chain crosses the membrane as a helical span at residues 138 to 158 (VILFMFVLAVAFVLSYAYVWM). Over 159–165 (ARLFPKQ) the chain is Cytoplasmic. The chain crosses the membrane as a helical span at residues 166-186 (FIWVTGILNVCWAIGTAIFYL). The Extracellular segment spans residues 187-191 (WRKYW). The chain crosses the membrane as a helical span at residues 192-212 (SAGIVFLIFGLFMAFCFWTWI). Residues 213-239 (SRIPFSALMLKTTIDVSKKYGHVYLVS) are Cytoplasmic-facing. The helical transmembrane segment at 240 to 260 (LIGGIIATAFSAWYAITLVGI) threads the bilayer. At 261–280 (YVKYQPAQDNPSCADGGCGK) the chain is on the extracellular side. Residues 281 to 301 (GKVIGLIAFITFAMYWFSEWL) traverse the membrane as a helical segment. At 302–335 (KNTIHTTIAGVYGSWYFNPHNFPKDATRASAKRA) the chain is on the cytoplasmic side. Residues 336–356 (LTYSFGSIALGSLLVAIIQFL) form a helical membrane-spanning segment. At 357–372 (RQICNAARNQEGADGS) the chain is on the extracellular side. A helical membrane pass occupies residues 373–393 (FVGYAIFCCISCLLGLLEWAV). The Cytoplasmic portion of the chain corresponds to 394-434 (EFINRYAFCHIALYGKAYFAAAKDTWKMIKDRGIDALINDC). Residues 435-455 (LIGPVLSFGALFIAYACALLA) traverse the membrane as a helical segment. At 456-474 (YLYLYFTDPAYNSDGQYTA) the chain is on the extracellular side. The helical transmembrane segment at 475-495 (VVMAFSFLIGFQIANVFTTPI) threads the bilayer. The Cytoplasmic segment spans residues 496 to 538 (SSGIETIFVAAGWDPQVMWRDHPELYNEMVRVYPKVQQVIKDR).

Belongs to the CTL (choline transporter-like) family.

Its subcellular location is the cell membrane. Its function is as follows. Probably involved in transport through the plasma membrane. This chain is Protein PNS1 (PNS1), found in Gibberella zeae (strain ATCC MYA-4620 / CBS 123657 / FGSC 9075 / NRRL 31084 / PH-1) (Wheat head blight fungus).